Consider the following 152-residue polypeptide: Snaclec agkisacutacin subunit A (152 aa).

Residues 1 to 23 (MGRFIFVSFGLLVVFLSLSGTAA) form the signal peptide. The C-type lectin domain occupies 24–152 (DCSSGWSSYE…EQQDPFVCEA (129 aa)). 3 disulfide bridges follow: cysteine 25–cysteine 36, cysteine 53–cysteine 150, and cysteine 125–cysteine 142. The Ca(2+) site is built by serine 64, glutamate 66, and glutamate 70. Glutamate 151 contacts Ca(2+).

Belongs to the snaclec family. In terms of assembly, heterodimer with subunit B of AaACP or agkisacutacin; disulfide-linked. In terms of tissue distribution, expressed by the venom gland.

The protein localises to the secreted. Anticoagulant protein which binds to the gamma-carboxyglutamic acid-domain regions of factors IX (F9) and factor X (F10) in the presence of calcium with a 1 to 1 stoichiometry. Also inhibits platelet aggregation by binding to platelet glycoprotein Ibalpha (GP1BA) and functioning as a blocker of von Willebrand factor (VWF). Is devoid of hemorrhagic and lethal activities. Possesses antithrombotic and thrombolytic activities. Also hydrolyzes the Aalpha-chain of fibrinogen (FGA). Does not affect the Bbeta-chain (FGB) and the gamma chain (FGG). This chain is Snaclec agkisacutacin subunit A, found in Deinagkistrodon acutus (Hundred-pace snake).